A 146-amino-acid chain; its full sequence is Putative pre-16S rRNA nuclease (146 aa).

It belongs to the YqgF nuclease family.

It is found in the cytoplasm. Functionally, could be a nuclease involved in processing of the 5'-end of pre-16S rRNA. The protein is Putative pre-16S rRNA nuclease of Pseudomonas syringae pv. tomato (strain ATCC BAA-871 / DC3000).